The sequence spans 236 residues: MSKEELKRAAAARALEYVSDGMQLGLGTGSTAKHFVELLGERVRAGLRVVGVPTSEGTRADAERCGVPLTTLDDVDHLDLTVDGADEIAPSLDVIKGGGGALLREKIVAAASTRMVVISDDSKWVETLGRFPLPVEVIPFGLGATRRALATAFAEAGVTGEITLRQGPDGHAFVTDGGHWILDAHLGRIPEPPRLAALLSAIPGVVEHGLFIGLAKTAILAGSQGIRIVDRPRGRV.

Residues 28–31, 83–86, and 96–99 contribute to the substrate site; these read TGST, DGAD, and KGGG. Glutamate 105 serves as the catalytic Proton acceptor. Lysine 123 is a substrate binding site.

The protein belongs to the ribose 5-phosphate isomerase family. Homodimer.

The catalysed reaction is aldehydo-D-ribose 5-phosphate = D-ribulose 5-phosphate. It functions in the pathway carbohydrate degradation; pentose phosphate pathway; D-ribose 5-phosphate from D-ribulose 5-phosphate (non-oxidative stage): step 1/1. In terms of biological role, catalyzes the reversible conversion of ribose-5-phosphate to ribulose 5-phosphate. The protein is Ribose-5-phosphate isomerase A of Afipia carboxidovorans (strain ATCC 49405 / DSM 1227 / KCTC 32145 / OM5) (Oligotropha carboxidovorans).